Consider the following 477-residue polypeptide: D(1B) dopamine receptor (477 aa).

Residues 1 to 39 (MLPPGSNGTAYPGQFALYQQLAQGNAVGGSAGAPPLGPS) are Extracellular-facing. Asparagine 7 is a glycosylation site (N-linked (GlcNAc...) asparagine). The helical transmembrane segment at 40-66 (QVVTACLLTLLIIWTLLGNVLVCAAIV) threads the bilayer. The Cytoplasmic portion of the chain corresponds to 67–77 (RSRHLRANMTN). Residues 78–104 (VFIVSLAVSDLFVALLVMPWKAVAEVA) form a helical membrane-spanning segment. Over 105–114 (GYWPFGAFCD) the chain is Extracellular. Cysteine 113 and cysteine 217 are joined by a disulfide. The chain crosses the membrane as a helical span at residues 115–136 (VWVAFDIMCSTASILNLCVISV). Topologically, residues 137 to 158 (DRYWAISRPFRYKRKMTQRMAL) are cytoplasmic. The helical transmembrane segment at 159 to 180 (VMVGLAWTLSILISFIPVQLNW) threads the bilayer. The Extracellular segment spans residues 181 to 223 (HRDQAASWGGLDLPNNLANWTPWEEDFWEPDVNAENCDSSLNR). Asparagine 222 carries an N-linked (GlcNAc...) asparagine glycan. The chain crosses the membrane as a helical span at residues 224–246 (TYAISSSLISFYIPVAIMIVTYT). At 247–296 (RIYRIAQVQIRRISSLERAAEHAQSCRSSAACAPDTSLRASIKKETKVLK) the chain is on the cytoplasmic side. A helical membrane pass occupies residues 297-320 (TLSVIMGVFVCCWLPFFILNCMVP). At 321–340 (FCSGHPEGPPAGFPCVSETT) the chain is on the extracellular side. A helical membrane pass occupies residues 341 to 360 (FDVFVWFGWANSSLNPVIYA). At 361-477 (FNADFQKVFA…ITPFTPNGFH (117 aa)) the chain is on the cytoplasmic side. Cysteine 375 carries S-palmitoyl cysteine lipidation.

Belongs to the G-protein coupled receptor 1 family. Neuron-specific, localized primarily within limbic regions of the brain.

The protein localises to the cell membrane. In terms of biological role, dopamine receptor whose activity is mediated by G proteins which activate adenylyl cyclase. The protein is D(1B) dopamine receptor (DRD5) of Homo sapiens (Human).